Reading from the N-terminus, the 310-residue chain is Olfactory receptor 10G2 (310 aa).

The Extracellular segment spans residues 1 to 29 (MGKTKNTSLDAVVTDFILLGLSHPPNLRS). N6 carries an N-linked (GlcNAc...) asparagine glycan. The helical transmembrane segment at 30–50 (LLFLVFFIIYILTQLGNLLIL) threads the bilayer. The Cytoplasmic portion of the chain corresponds to 51–58 (LTMWADPK). The chain crosses the membrane as a helical span at residues 59–80 (LCARPMYILLGVLSFLDMWLSS). The Extracellular portion of the chain corresponds to 81-104 (VTVPLLILDFTPSIKAIPFGGCVA). C102 and C194 form a disulfide bridge. A helical transmembrane segment spans residues 105–125 (QLYFFHFLGSTQCFLYTLMAY). The Cytoplasmic segment spans residues 126 to 144 (DRYLAICQPLRYPVLMNGR). The helical transmembrane segment at 145-165 (LCTVLVAGAWVAGSMHGSIQA) threads the bilayer. The Extracellular portion of the chain corresponds to 166–202 (TLTFRLPYCGPNQVDYFICDIPAVLRLACADTTVNEL). The chain crosses the membrane as a helical span at residues 203–222 (VTFVDVGVVAASCFMLILLS). At 223–242 (YANIVNAILKIRTTDGRRRA) the chain is on the cytoplasmic side. The chain crosses the membrane as a helical span at residues 243 to 263 (FSTCGSHLIVVTVYYVPCIFI). Topologically, residues 264 to 274 (YLRAGSKDPLD) are extracellular. Residues 275–295 (GAAAVFYTVVTPLLNPLIYTL) form a helical membrane-spanning segment. The Cytoplasmic segment spans residues 296-310 (RNQEVKSALKRITAG).

Belongs to the G-protein coupled receptor 1 family.

The protein resides in the cell membrane. Its function is as follows. Odorant receptor. In Homo sapiens (Human), this protein is Olfactory receptor 10G2 (OR10G2).